The chain runs to 153 residues: Transcriptional repressor NrdR (153 aa).

A zinc finger spans residues 3 to 34; it reads CPFCNNINTQVKDSRAIEDDILIRRRRICLVC. An ATP-cone domain is found at 49–139; that stretch reads FMVIKKNGET…VYMNFKNIND (91 aa).

This sequence belongs to the NrdR family. The cofactor is Zn(2+).

In terms of biological role, negatively regulates transcription of bacterial ribonucleotide reductase nrd genes and operons by binding to NrdR-boxes. The sequence is that of Transcriptional repressor NrdR from Ehrlichia canis (strain Jake).